A 96-amino-acid polypeptide reads, in one-letter code: MKVTDVKIRKINGESRLRGVASIAFDDCFVVNDIRIIEGEKGIFIAMPSRKTTKGTFRDIAHPVNTETRQVIEESILTKYQDVLNNPVEDKPEQEN.

It belongs to the SpoVG family.

Its function is as follows. Could be involved in septation. The polypeptide is Putative septation protein SpoVG (Phytoplasma australiense).